The primary structure comprises 156 residues: Small ribosomal subunit protein uS7 (156 aa).

The protein belongs to the universal ribosomal protein uS7 family. As to quaternary structure, part of the 30S ribosomal subunit. Contacts proteins S9 and S11.

In terms of biological role, one of the primary rRNA binding proteins, it binds directly to 16S rRNA where it nucleates assembly of the head domain of the 30S subunit. Is located at the subunit interface close to the decoding center, probably blocks exit of the E-site tRNA. The sequence is that of Small ribosomal subunit protein uS7 from Rhizobium meliloti (strain 1021) (Ensifer meliloti).